A 228-amino-acid chain; its full sequence is Chromatin remodeling protein SHL (228 aa).

Positions 21 to 137 (KSIQEGDAVL…STTGAFDPDR (117 aa)) constitute a BAH domain. The PHD-type zinc finger occupies 139–190 (TVFCKCEMPYNPDDLMVQCEECSEWFHPSCIGTTIEEAKKPDNFYCEECSPQ). Residues 191–203 (QQNLHNSNSTSNN) are compositionally biased toward polar residues. Residues 191-228 (QQNLHNSNSTSNNRDAKVNGKRSLEVTKSKNKHTKRPG) form a disordered region. The span at 204-218 (RDAKVNGKRSLEVTK) shows a compositional bias: basic and acidic residues. Residues 210-217 (GKRSLEVT) carry the Nuclear localization signal motif. Over residues 219-228 (SKNKHTKRPG) the composition is skewed to basic residues.

Belongs to the SHL1/EBS protein family. Recognizes di- and trimethylated histone H3 at lysine 4. Interacts with HDA6. Interacts with DEK3. Expressed ubiquitously. Mostly expressed in roots, stems, leaves and flowers, and, to a lower extent, in siliques.

Its subcellular location is the nucleus. In terms of biological role, chromatin remodeling factor that binds to methylated histone (e.g. H3K4me2/3) to prevent their acetylation (e.g. H3K9K14Ac), likely by recruiting histone deacetylase (HDAC) complexes, and thus regulate the transcription of target genes. Required during development and for fertility, probably by modulating developmental gene expression. Promotes development speed, but at fitness cost. Involved in the chromatin-mediated repression of floral initiation and controls genes regulating flowering. Negatively regulates the expression of the floral integrator SOC1, by preventing high levels of H3 acetylation, thus maintaining an inactive chromatin conformation. This Arabidopsis thaliana (Mouse-ear cress) protein is Chromatin remodeling protein SHL.